We begin with the raw amino-acid sequence, 68 residues long: Large ribosomal subunit protein uL29 (68 aa).

It belongs to the universal ribosomal protein uL29 family.

This Rhodopseudomonas palustris (strain BisA53) protein is Large ribosomal subunit protein uL29.